We begin with the raw amino-acid sequence, 79 residues long: Secretory calcium-binding phosphoprotein proline-glutamine rich 1 (79 aa).

A signal peptide spans 1-15; the sequence is MKFLILAGLLSTATA.

It is found in the secreted. Tooth-associated epithelia protein that may participate in structuring the basal lamina at cell-tooth interface. This chain is Secretory calcium-binding phosphoprotein proline-glutamine rich 1, found in Homo sapiens (Human).